The following is an 897-amino-acid chain: Echinoderm microtubule-associated protein-like 3 (897 aa).

Met1 carries the post-translational modification N-acetylmethionine. Residues 16–43 (LQTLSQRLRVQEEEMELVKAALAEALRL) are a coiled coil. Positions 51–68 (TTLQGSGISAPTRNSSIT) are enriched in polar residues. The segment at 51–210 (TTLQGSGISA…GGPGSRRSNY (160 aa)) is disordered. 3 stretches are compositionally biased toward low complexity: residues 96–108 (PSSG…NGPP), 118–132 (SGTQ…SSGA), and 155–164 (RNSSSSSSPS). Polar residues predominate over residues 175-190 (AASSANLLLRSGSTES). Phosphoserine is present on residues Ser177, Ser199, and Ser205. WD repeat units lie at residues 235-287 (RSLE…LYRP), 296-345 (GGGQ…IWDS), 351-393 (LQEI…VWDC), 399-435 (LAEI…FWNW), 449-488 (RKQG…TWGR), 505-544 (YTIV…QWGP), 550-585 (QEAE…LRGD), 590-627 (FSPV…LWDG), 630-668 (HALA…VLDT), 675-710 (SDVT…IYSV), 717-756 (SSRF…YWDV), 766-824 (RYES…LFQY), and 831-870 (APSR…QWRV). A disordered region spans residues 876–897 (SGPAPATPSRTPSLSPASSLDV). Thr882 bears the Phosphothreonine; by CDK1 mark. Over residues 883–897 (PSRTPSLSPASSLDV) the composition is skewed to polar residues. Phosphoserine is present on Ser884.

Belongs to the WD repeat EMAP family. In terms of assembly, homotrimer; self-association is mediated by the N-terminal coiled coil. Interacts with EML2 but not with EML1. Interacts (phosphorylated at Thr-882) with TUBG1, HAUS1, HAUS2, HAUS3, HAUS4, HAUS5, HAUS6, HAUS7 and HAUS8. In terms of processing, phosphorylation at Thr-882 during mitosis is required for interaction with TUBG1, HAUS1, HAUS2, HAUS3, HAUS4, HAUS5, HAUS6, HAUS7 and HAUS8 and their recruitment to spindle microtubules.

Its subcellular location is the cytoplasm. It localises to the cytoskeleton. It is found in the nucleus. The protein localises to the midbody. The protein resides in the spindle. Regulates mitotic spindle assembly, microtubule (MT)-kinetochore attachment and chromosome separation via recruitment of HAUS augmin-like complex and TUBG1 to the existing MTs and promoting MT-based MT nucleation. Required for proper alignnment of chromosomes during metaphase. This chain is Echinoderm microtubule-associated protein-like 3 (Eml3), found in Mus musculus (Mouse).